The sequence spans 672 residues: Acetoacetyl-CoA synthetase (672 aa).

This sequence belongs to the ATP-dependent AMP-binding enzyme family. Abundant in male subcutaneous white adipose tissue after weaning. In white adipose tissue, it is preferentially detected in mature adipocytes but not in preadipocytes. The expression in primary preadipocytes increases during the adipocyte differentiation. In brain, it is expressed in the midbrain, pons/medulla, cerebral cortex, hippocampus and cerebellum. The expression in the cerebellum is restricted primarily to glial cells, while in the cerebral cortex, it is restricted to neuronal cells.

It localises to the cytoplasm. It is found in the cytosol. The catalysed reaction is acetoacetate + ATP + CoA = acetoacetyl-CoA + AMP + diphosphate. Its function is as follows. Converts acetoacetate to acetoacetyl-CoA in the cytosol. Ketone body-utilizing enzyme, responsible for the synthesis of cholesterol and fatty acids. The protein is Acetoacetyl-CoA synthetase (Aacs) of Rattus norvegicus (Rat).